A 358-amino-acid polypeptide reads, in one-letter code: tRNA-specific 2-thiouridylase MnmA (358 aa).

ATP is bound by residues 10-17 (AMSGGVDS) and Met-36. The active-site Nucleophile is the Cys-105. Cys-105 and Cys-202 are oxidised to a cystine. Gly-129 contributes to the ATP binding site. The segment at 152 to 154 (KDQ) is interaction with tRNA. Catalysis depends on Cys-202, which acts as the Cysteine persulfide intermediate. The interaction with tRNA stretch occupies residues 308–309 (RY).

The protein belongs to the MnmA/TRMU family.

The protein localises to the cytoplasm. The enzyme catalyses S-sulfanyl-L-cysteinyl-[protein] + uridine(34) in tRNA + AH2 + ATP = 2-thiouridine(34) in tRNA + L-cysteinyl-[protein] + A + AMP + diphosphate + H(+). Functionally, catalyzes the 2-thiolation of uridine at the wobble position (U34) of tRNA, leading to the formation of s(2)U34. The protein is tRNA-specific 2-thiouridylase MnmA of Magnetococcus marinus (strain ATCC BAA-1437 / JCM 17883 / MC-1).